Consider the following 141-residue polypeptide: Organic hydroperoxide resistance protein OhrA (141 aa).

The protein belongs to the OsmC/Ohr family.

In terms of biological role, involved in organic hydroperoxide resistance. This chain is Organic hydroperoxide resistance protein OhrA (ohrA), found in Bacillus subtilis (strain 168).